A 423-amino-acid polypeptide reads, in one-letter code: Serine hydroxymethyltransferase (423 aa).

119-121 (GHI) provides a ligand contact to (6S)-5,6,7,8-tetrahydrofolate. Lys-225 is modified (N6-(pyridoxal phosphate)lysine).

This sequence belongs to the SHMT family. In terms of assembly, homodimer. Pyridoxal 5'-phosphate is required as a cofactor.

It is found in the cytoplasm. The catalysed reaction is (6R)-5,10-methylene-5,6,7,8-tetrahydrofolate + glycine + H2O = (6S)-5,6,7,8-tetrahydrofolate + L-serine. Its pathway is one-carbon metabolism; tetrahydrofolate interconversion. It functions in the pathway amino-acid biosynthesis; glycine biosynthesis; glycine from L-serine: step 1/1. Functionally, catalyzes the reversible interconversion of serine and glycine with tetrahydrofolate (THF) serving as the one-carbon carrier. Also exhibits THF-independent aldolase activity toward beta-hydroxyamino acids, producing glycine and aldehydes, via a retro-aldol mechanism. The chain is Serine hydroxymethyltransferase from Methanocella arvoryzae (strain DSM 22066 / NBRC 105507 / MRE50).